The sequence spans 182 residues: Heat shock protein beta-2 (182 aa).

A sHSP domain is found at 55-163 (RAGEGARAGA…DTEVNEVYIS (109 aa)).

The protein belongs to the small heat shock protein (HSP20) family. As to quaternary structure, interacts with DMPK; may enhance its kinase activity.

Its subcellular location is the cytoplasm. The protein resides in the nucleus. Its function is as follows. May regulate the kinase DMPK. In Mus musculus (Mouse), this protein is Heat shock protein beta-2 (Hspb2).